Here is a 252-residue protein sequence, read N- to C-terminus: Hydroxyacylglutathione hydrolase (252 aa).

Histidine 54, histidine 56, aspartate 58, histidine 59, histidine 113, aspartate 132, and histidine 170 together coordinate Zn(2+).

The protein belongs to the metallo-beta-lactamase superfamily. Glyoxalase II family. Monomer. Zn(2+) is required as a cofactor.

It carries out the reaction an S-(2-hydroxyacyl)glutathione + H2O = a 2-hydroxy carboxylate + glutathione + H(+). It participates in secondary metabolite metabolism; methylglyoxal degradation; (R)-lactate from methylglyoxal: step 2/2. Functionally, thiolesterase that catalyzes the hydrolysis of S-D-lactoyl-glutathione to form glutathione and D-lactic acid. The chain is Hydroxyacylglutathione hydrolase from Synechococcus sp. (strain JA-2-3B'a(2-13)) (Cyanobacteria bacterium Yellowstone B-Prime).